The following is a 712-amino-acid chain: Eukaryotic translation initiation factor 3 subunit B (712 aa).

Methionine 1 carries the N-acetylmethionine modification. In terms of domain architecture, RRM spans 56 to 143 (NIIVVDHLPV…HIFAVNMFDD (88 aa)).

Belongs to the eIF-3 subunit B family. As to quaternary structure, component of the eukaryotic translation initiation factor 3 (eIF-3) complex, which is composed of at least 13 different subunits. Binds to the translation initiation factor TIF3H1.

It is found in the cytoplasm. In terms of biological role, RNA-binding component of the eukaryotic translation initiation factor 3 (eIF-3) complex, which is involved in protein synthesis of a specialized repertoire of mRNAs and, together with other initiation factors, stimulates binding of mRNA and methionyl-tRNAi to the 40S ribosome. The eIF-3 complex specifically targets and initiates translation of a subset of mRNAs involved in cell proliferation. This Arabidopsis thaliana (Mouse-ear cress) protein is Eukaryotic translation initiation factor 3 subunit B (TIF3B1).